The primary structure comprises 204 residues: phospholipase A2 inhibitor and Ly6/PLAUR domain-containing protein (204 aa).

The signal sequence occupies residues 1-26 (MRLSRRPETFLLAFVLLCTLLGLGCP). Residues 27–117 (LHCEICTAAG…NSAFLSVPLT (91 aa)) form the UPAR/Ly6 domain. Intrachain disulfides connect cysteine 29–cysteine 53, cysteine 32–cysteine 39, cysteine 46–cysteine 74, cysteine 80–cysteine 101, cysteine 102–cysteine 107, cysteine 126–cysteine 151, and cysteine 144–cysteine 172.

It belongs to the CNF-like-inhibitor family.

The protein resides in the secreted. This chain is phospholipase A2 inhibitor and Ly6/PLAUR domain-containing protein (PINLYP), found in Homo sapiens (Human).